Reading from the N-terminus, the 920-residue chain is 2-oxoglutarate dehydrogenase E1 component (920 aa).

Belongs to the alpha-ketoglutarate dehydrogenase family. Homodimer. Part of the 2-oxoglutarate dehydrogenase (OGDH) complex composed of E1 (2-oxoglutarate dehydrogenase), E2 (dihydrolipoamide succinyltransferase) and E3 (dihydrolipoamide dehydrogenase); the complex contains multiple copies of the three enzymatic components (E1, E2 and E3). Thiamine diphosphate serves as cofactor.

The enzyme catalyses N(6)-[(R)-lipoyl]-L-lysyl-[protein] + 2-oxoglutarate + H(+) = N(6)-[(R)-S(8)-succinyldihydrolipoyl]-L-lysyl-[protein] + CO2. Its function is as follows. E1 component of the 2-oxoglutarate dehydrogenase (OGDH) complex which catalyzes the decarboxylation of 2-oxoglutarate, the first step in the conversion of 2-oxoglutarate to succinyl-CoA and CO(2). In Leptospira interrogans serogroup Icterohaemorrhagiae serovar copenhageni (strain Fiocruz L1-130), this protein is 2-oxoglutarate dehydrogenase E1 component.